A 214-amino-acid polypeptide reads, in one-letter code: Thiamine-phosphate synthase (214 aa).

4-amino-2-methyl-5-(diphosphooxymethyl)pyrimidine contacts are provided by residues 37–41 (QYREK) and asparagine 73. Mg(2+) contacts are provided by aspartate 74 and aspartate 93. 4-amino-2-methyl-5-(diphosphooxymethyl)pyrimidine is bound at residue serine 112. 139-141 (TIS) contacts 2-[(2R,5Z)-2-carboxy-4-methylthiazol-5(2H)-ylidene]ethyl phosphate. Position 142 (lysine 142) interacts with 4-amino-2-methyl-5-(diphosphooxymethyl)pyrimidine. Residues glycine 171 and 191–192 (IS) contribute to the 2-[(2R,5Z)-2-carboxy-4-methylthiazol-5(2H)-ylidene]ethyl phosphate site.

It belongs to the thiamine-phosphate synthase family. It depends on Mg(2+) as a cofactor.

It catalyses the reaction 2-[(2R,5Z)-2-carboxy-4-methylthiazol-5(2H)-ylidene]ethyl phosphate + 4-amino-2-methyl-5-(diphosphooxymethyl)pyrimidine + 2 H(+) = thiamine phosphate + CO2 + diphosphate. The enzyme catalyses 2-(2-carboxy-4-methylthiazol-5-yl)ethyl phosphate + 4-amino-2-methyl-5-(diphosphooxymethyl)pyrimidine + 2 H(+) = thiamine phosphate + CO2 + diphosphate. It carries out the reaction 4-methyl-5-(2-phosphooxyethyl)-thiazole + 4-amino-2-methyl-5-(diphosphooxymethyl)pyrimidine + H(+) = thiamine phosphate + diphosphate. Its pathway is cofactor biosynthesis; thiamine diphosphate biosynthesis; thiamine phosphate from 4-amino-2-methyl-5-diphosphomethylpyrimidine and 4-methyl-5-(2-phosphoethyl)-thiazole: step 1/1. Its function is as follows. Condenses 4-methyl-5-(beta-hydroxyethyl)thiazole monophosphate (THZ-P) and 2-methyl-4-amino-5-hydroxymethyl pyrimidine pyrophosphate (HMP-PP) to form thiamine monophosphate (TMP). This Listeria innocua serovar 6a (strain ATCC BAA-680 / CLIP 11262) protein is Thiamine-phosphate synthase.